The sequence spans 539 residues: MPTALPAWQSLSQHAQAIRATHMRDWFAAPDAEQRVHAFTVEAAGLTLDYAKNRITPETLALLLQLADEAGVLTLRDAMLRGERINNTEHRSVLHAALRGHAEDDYRANGAAVMPDVLRVRAQMRDFAQRVHSGTWTGHAGQRITDVVNIGIGGSDLGPRMVCRALAHLAVPQVRVHFVSNVDGTDLAETLAGLNPDTTLAIVCSKTFTTLETMANAHSMRRWFIEHGVPEAQLKQHFVAVSTNRDAVVAFGIDPDNMFTFWDWVGGRFSLWSAVGLSIVLAIGPEQFETMLDGARAMDRHFASAAPRENMPLILGLLSVWYRGFFGAASACTVPYCAPLELLTDFMQQLEMESNGKSVQRNGAAIGTDTGPIVWGTAGTNGQHAYFQLIHQGSQIVPVDFITTLEPVRSLPGHHTKLLANCFAQGEALLRGRTAEEVRADGITDAALVPHMVFEGNRPSNTILMQRLDAASLGALIACAEHRTFVQGAVWNINSFDQWGVELGKKLAKPILEELEGAPASVAHDASTAALIRRAKAAR.

The Proton donor role is filled by E353. Residues H384 and K505 contribute to the active site.

It belongs to the GPI family.

It localises to the cytoplasm. It catalyses the reaction alpha-D-glucose 6-phosphate = beta-D-fructose 6-phosphate. It functions in the pathway carbohydrate biosynthesis; gluconeogenesis. Its pathway is carbohydrate degradation; glycolysis; D-glyceraldehyde 3-phosphate and glycerone phosphate from D-glucose: step 2/4. Catalyzes the reversible isomerization of glucose-6-phosphate to fructose-6-phosphate. The sequence is that of Glucose-6-phosphate isomerase from Ralstonia nicotianae (strain ATCC BAA-1114 / GMI1000) (Ralstonia solanacearum).